The chain runs to 722 residues: Host cell factor 2 (722 aa).

Kelch repeat units lie at residues 34-79, 83-130, 207-255, and 257-303; these read LMII…GFVC, RILV…RLGH, KMYV…VIGN, and MYIF…VSDS. 3 Fibronectin type-III domains span residues 359–460, 514–604, and 606–716; these read APSQ…VDSS, TPSN…TCTP, and FPGA…DQEK. The disordered stretch occupies residues 398 to 476; sequence ATSSDSSAAP…LAPNTSNNSS (79 aa). The segment covering 419 to 436 has biased composition (polar residues); that stretch reads QGSNSTLHNSVSDTVNST.

Binds KMT2A/MLL1. Component of the MLL1/MLL complex, at least composed of KMT2A/MLL1, ASH2L, RBBP5, DPY30, WDR5, MEN1, HCFC1 and HCFC2. Interacts with TASOR. Expressed in the spermatogonia, spermatocytes and ovary.

The protein localises to the cytoplasm. It is found in the nucleus. The polypeptide is Host cell factor 2 (Hcfc2) (Mus musculus (Mouse)).